The primary structure comprises 305 residues: MAELNVNIGNLPLKNPVMTASGTFGYGIEYADFMDISRLGGIFVKGTTIQPREGNDYPRMAETPSGMLNAVGLQNKGADYFAEHIYPKIKDINTNMIVNVSGSSVETYVECAEKIAELDRIPAIELNISCPNVKQGGMAFGVTTCGAGEVVKAVRRVYPKILIVKLSPNVTDITEIAKAVEAEGADSVSLINTMLGMAIDAEKRKPILSTITGGLSGPCVKPVALRMVWQTYHAVKIPIIGLGGISNWKDAVEFMLAGASAIQIGTYNFVDPTVSIKVIDGLNDYCDRHGFKSVKELIGALDIQR.

Residues Ser-21 and 45–46 each bind FMN; that span reads KG. Residues Lys-45 and 69–73 each bind substrate; that span reads NAVGL. Residues Asn-99 and Asn-127 each coordinate FMN. Asn-127 lines the substrate pocket. Residue Cys-130 is the Nucleophile of the active site. FMN contacts are provided by Lys-165 and Ile-191. Substrate is bound at residue 192-193; that stretch reads NT. FMN-binding positions include Gly-217, 243-244, and 265-266; these read GG and GT.

The protein belongs to the dihydroorotate dehydrogenase family. Type 1 subfamily. Heterotetramer of 2 PyrK and 2 PyrD type B subunits. FMN serves as cofactor.

The protein localises to the cytoplasm. It catalyses the reaction (S)-dihydroorotate + NAD(+) = orotate + NADH + H(+). Its pathway is pyrimidine metabolism; UMP biosynthesis via de novo pathway; orotate from (S)-dihydroorotate (NAD(+) route): step 1/1. Its function is as follows. Catalyzes the conversion of dihydroorotate to orotate with NAD(+) as electron acceptor. This chain is Dihydroorotate dehydrogenase B (NAD(+)), catalytic subunit (pyrD), found in Parabacteroides distasonis (strain ATCC 8503 / DSM 20701 / CIP 104284 / JCM 5825 / NCTC 11152).